The primary structure comprises 373 residues: Queuine tRNA-ribosyltransferase (373 aa).

The active-site Proton acceptor is the aspartate 90. Substrate is bound by residues aspartate 90–phenylalanine 94, aspartate 144, glutamine 193, and glycine 220. The tract at residues glycine 251–aspartate 257 is RNA binding. The active-site Nucleophile is the aspartate 270. The interval threonine 275–arginine 279 is RNA binding; important for wobble base 34 recognition. Zn(2+) contacts are provided by cysteine 308, cysteine 310, cysteine 313, and histidine 339.

Belongs to the queuine tRNA-ribosyltransferase family. Homodimer. Within each dimer, one monomer is responsible for RNA recognition and catalysis, while the other monomer binds to the replacement base PreQ1. Zn(2+) serves as cofactor.

It carries out the reaction 7-aminomethyl-7-carbaguanine + guanosine(34) in tRNA = 7-aminomethyl-7-carbaguanosine(34) in tRNA + guanine. It participates in tRNA modification; tRNA-queuosine biosynthesis. In terms of biological role, catalyzes the base-exchange of a guanine (G) residue with the queuine precursor 7-aminomethyl-7-deazaguanine (PreQ1) at position 34 (anticodon wobble position) in tRNAs with GU(N) anticodons (tRNA-Asp, -Asn, -His and -Tyr). Catalysis occurs through a double-displacement mechanism. The nucleophile active site attacks the C1' of nucleotide 34 to detach the guanine base from the RNA, forming a covalent enzyme-RNA intermediate. The proton acceptor active site deprotonates the incoming PreQ1, allowing a nucleophilic attack on the C1' of the ribose to form the product. After dissociation, two additional enzymatic reactions on the tRNA convert PreQ1 to queuine (Q), resulting in the hypermodified nucleoside queuosine (7-(((4,5-cis-dihydroxy-2-cyclopenten-1-yl)amino)methyl)-7-deazaguanosine). This chain is Queuine tRNA-ribosyltransferase, found in Campylobacter jejuni subsp. doylei (strain ATCC BAA-1458 / RM4099 / 269.97).